Reading from the N-terminus, the 160-residue chain is Transcription elongation factor GreA (160 aa).

A coiled-coil region spans residues 49-75; that stretch reads SEYDEAKNDQAFTEGKILQLENKLKNA.

The protein belongs to the GreA/GreB family.

Functionally, necessary for efficient RNA polymerase transcription elongation past template-encoded arresting sites. The arresting sites in DNA have the property of trapping a certain fraction of elongating RNA polymerases that pass through, resulting in locked ternary complexes. Cleavage of the nascent transcript by cleavage factors such as GreA or GreB allows the resumption of elongation from the new 3'terminus. GreA releases sequences of 2 to 3 nucleotides. The sequence is that of Transcription elongation factor GreA from Clostridium botulinum (strain Eklund 17B / Type B).